A 287-amino-acid polypeptide reads, in one-letter code: Intermediate filament family orphan 2 (287 aa).

The IF rod domain maps to 1-254 (MNLQTMVDTL…RLIKGSADRN (254 aa)). The disordered stretch occupies residues 248-287 (KGSADRNSPSPSSVASSDSGSTDEIQDDLEREADVEPMVS). Low complexity predominate over residues 255–267 (SPSPSSVASSDSG). Acidic residues predominate over residues 271–287 (EIQDDLEREADVEPMVS).

This sequence belongs to the intermediate filament family.

This is Intermediate filament family orphan 2 (Iffo2) from Rattus norvegicus (Rat).